The following is a 345-amino-acid chain: MDENKKRALAAALGQIEKQFGKGSVMRMGDRVVEPVEAIPTGSLMLDIALGIGGLPKGRVVEIYGPESSGKTTLTLQAIAECQKLGGTAAFIDAEHALDPIYAAKLGVNVDDLLLSQPDTGEQALEIADMLVRSGSVDILVVDSVAALTPKAEIEGEMGDQLPGLQARLMSQALRKLTGNIKRSNTLVVFINQLRMKIGVMMPGQSPEVTTGGNALKFYASVRLDIRRIGAIKKGDEIIGNQTKIKVVKNKLAPPFKQVITEILYGEGISREGELIDMGVDAKLVEKAGAWYSYGEERIGQGKDNARGYLRDNPTVAAKLEAELREKFQPSEAAREEGDDEGDDE.

An ATP-binding site is contributed by 65 to 72 (GPESSGKT).

This sequence belongs to the RecA family.

The protein localises to the cytoplasm. Can catalyze the hydrolysis of ATP in the presence of single-stranded DNA, the ATP-dependent uptake of single-stranded DNA by duplex DNA, and the ATP-dependent hybridization of homologous single-stranded DNAs. It interacts with LexA causing its activation and leading to its autocatalytic cleavage. In Stenotrophomonas maltophilia (strain R551-3), this protein is Protein RecA.